A 276-amino-acid chain; its full sequence is Molybdenum storage protein subunit alpha (276 aa).

Octamer consisting of 4 alpha and 4 beta chains.

It localises to the cytoplasm. Intracellular storage of molybdenum. Binds polyoxomolybdates. Can bind at least 90 molybdenum atoms per protein molecule. This is Molybdenum storage protein subunit alpha from Azotobacter vinelandii (strain DJ / ATCC BAA-1303).